Reading from the N-terminus, the 815-residue chain is MGSDKRVSRTERSGRYGSIIDRDDRDERESRSRRRDSDYKRSSDDRRGDRYDDYRDYDSPERERERRNSDRSEDGYHSDGDYGEHDYRHDISDERESKTIMLRGLPITITESDIREMMESFEGPQPADVRLMKRKTGVSRGFAFVEFYHLQDATSWMEANQKKLVIQGKHIAMHYSNPRPKFEDWLCNKCCLNNFRKRLKCFRCGADKFDSEQEVPPGTTESVQSVDYYCDTIILRNIAPHTVVDSIMTALSPYASLAVNNIRLIKDKQTQQNRGFAFVQLSSAMDASQLLQILQSLHPPLKIDGKTIGVDFAKSARKDLVLSDGNRVSAFSVASTAIAAAQWSSTQSQSGEGGSVDYSYLQPGQDGYAQYAQYSQDYQQFYQQQAGGLESDASSASGTAVTTTSAAVVSQSPQLYNQTSNPPGSPTEEAQPSTSTSTQAPAASPTGVVPGTKYAVPDTSTYQYDESSGYYYDPTTGLYYDPNSQYYYNSLTQQYLYWDGEKETYVPAAESSSHQQSGLPPAKEGKEKKEKPKSKTAQQIAKDMERWAKSLNKQKENFKNSFQPVNSLREEERRESAAADAGFALFEKKGALAERQQLIPELVRNGDEENPLKRGLVAAYSGDSDNEEELVERLESEEEKLADWKKMACLLCRRQFPNKDALVRHQQLSDLHKQNMDIYRRSRLSEQELEALELREREMKYRDRAAERREKYGIPEPPEPKRKKQFDAGTVNYEQPTKDGIDHSNIGNKMLQAMGWREGSGLGRKCQGITAPIEAQVRLKGAGLGAKGSAYGLSGADSYKDAVRKAMFARFTEME.

Positions 1 to 93 (MGSDKRVSRT…EHDYRHDISD (93 aa)) are disordered. Phosphoserine is present on residues serine 18, serine 59, serine 69, serine 72, and serine 78. Residues 98 to 178 (KTIMLRGLPI…KHIAMHYSNP (81 aa)) form the RRM 1 domain. The RanBP2-type zinc-finger motif lies at 181 to 210 (KFEDWLCNKCCLNNFRKRLKCFRCGADKFD). One can recognise an RRM 2 domain in the interval 231–315 (DTIILRNIAP…KTIGVDFAKS (85 aa)). Residues 321 to 809 (VLSDGNRVSA…KDAVRKAMFA (489 aa)) form a required for interaction with U2AF2 region. Polar residues predominate over residues 411-422 (QSPQLYNQTSNP). 2 disordered regions span residues 411-468 (QSPQ…DESS) and 507-540 (PAAE…AQQI). Low complexity predominate over residues 426–446 (PTEEAQPSTSTSTQAPAASPT). At serine 444 the chain carries Phosphoserine. The interval 452–535 (TKYAVPDTST…KEKKEKPKSK (84 aa)) is sufficient for interaction with ACIN1, PRPF8, SFRS3, SNRPB, SNRPN, SNRNP70 and SNRNP200. 2 positions are modified to phosphoserine: serine 621 and serine 624. A C2H2-type; atypical zinc finger spans residues 647 to 677 (MACLLCRRQFPNKDALVRHQQLSDLHKQNMD). The G-patch domain occupies 743-789 (HSNIGNKMLQAMGWREGSGLGRKCQGITAPIEAQVRLKGAGLGAKGS).

This sequence belongs to the RBM5/RBM10 family. As to quaternary structure, component of the spliceosome A complex (also known as the prespliceosome). Appears to dissociate from the spliceosome upon formation of the spliceosome B complex (also known as the precatalytic spliceosome), in which the heterotrimeric U4/U6.U5 snRNPs are bound. Interacts with U2AF2; this interaction is direct. Also interacts with ACIN1, PRPF8, SFRS3, SNRPB, SNRPN, SNRNP70 and SNRNP200; these interactions may be indirect. Isoform 5 is widely expressed in normal tissues and is expressed at increased levels in T-leukemic cell lines.

Its subcellular location is the nucleus. In terms of biological role, component of the spliceosome A complex. Binds to ssRNA containing the consensus sequence 5'-AGGUAA-3'. Regulates alternative splicing of a number of mRNAs. May modulate splice site pairing after recruitment of the U1 and U2 snRNPs to the 5' and 3' splice sites of the intron. May both positively and negatively regulate apoptosis by regulating the alternative splicing of several genes involved in this process, including FAS and CASP2/caspase-2. In the case of FAS, promotes exclusion of exon 6 thereby producing a soluble form of FAS that inhibits apoptosis. In the case of CASP2/caspase-2, promotes exclusion of exon 9 thereby producing a catalytically active form of CASP2/Caspase-2 that induces apoptosis. The protein is RNA-binding protein 5 (RBM5) of Homo sapiens (Human).